We begin with the raw amino-acid sequence, 140 residues long: MKAFIVLVALAMAAPALGRTLDRCSLAREMSNLGVPRDQLARWACIAEHESSYRTGVVGPENYNGSNDYGIFQINNYYWCAPPSGRFSYNECGLSCNALLTDDITHSVRCAQKVLSQQGWSAWSTWHYCSGWLPSIDGCF.

A signal peptide spans 1-18; that stretch reads MKAFIVLVALAMAAPALG. A C-type lysozyme domain is found at 19–140; sequence RTLDRCSLAR…GWLPSIDGCF (122 aa). Disulfide bonds link C24–C139, C45–C129, C80–C96, and C92–C110. Active-site residues include E50 and D68.

The protein belongs to the glycosyl hydrolase 22 family. Found in the midgut.

The enzyme catalyses Hydrolysis of (1-&gt;4)-beta-linkages between N-acetylmuramic acid and N-acetyl-D-glucosamine residues in a peptidoglycan and between N-acetyl-D-glucosamine residues in chitodextrins.. Unlikely to play an active role in the humoral immune defense. May have a function in the digestion of bacteria in the food. In Drosophila melanogaster (Fruit fly), this protein is Lysozyme E (LysE).